We begin with the raw amino-acid sequence, 541 residues long: Peptide chain release factor 3 (541 aa).

The tr-type G domain maps to 14–283 (EARRNFAIIS…AFLDYALKPG (270 aa)). Residues 23–30 (SHPDAGKT), 91–95 (DTPGH), and 145–148 (NKLD) each bind GTP.

It belongs to the TRAFAC class translation factor GTPase superfamily. Classic translation factor GTPase family. PrfC subfamily.

The protein localises to the cytoplasm. Functionally, increases the formation of ribosomal termination complexes and stimulates activities of RF-1 and RF-2. It binds guanine nucleotides and has strong preference for UGA stop codons. It may interact directly with the ribosome. The stimulation of RF-1 and RF-2 is significantly reduced by GTP and GDP, but not by GMP. This chain is Peptide chain release factor 3, found in Acaryochloris marina (strain MBIC 11017).